The sequence spans 219 residues: Mucosal pentraxin (219 aa).

The signal sequence occupies residues 1–19 (MEKLIVGILFLSVLSGSVA). Positions 24-219 (KGKAFIFPQE…YVVIKPKLWP (196 aa)) constitute a Pentraxin (PTX) domain. Asn-51 carries N-linked (GlcNAc...) asparagine glycosylation. An intrachain disulfide couples Cys-55 to Cys-114. Residues Asp-77, Asn-78, Glu-155, Gln-156, Asp-157, and Gln-167 each contribute to the Ca(2+) site.

This sequence belongs to the pentraxin family. In terms of assembly, homopentamer. Pentraxin (or pentaxin) have a discoid arrangement of 5 non-covalently bound subunits. The cofactor is Ca(2+). In terms of tissue distribution, expressed in colon.

It localises to the secreted. This is Mucosal pentraxin (Mptx1) from Mus musculus (Mouse).